Here is a 533-residue protein sequence, read N- to C-terminus: Probable RNA-binding protein 46 (533 aa).

RRM domains lie at 61–139, 141–223, and 236–308; these read CEVF…VSLD, CRLF…WADP, and KVLY…LAKP.

Interacts with YTHDC2, MEIOC, MOV10, CNOT6L, DDX4, UPF1 and PABPC1.

The protein localises to the cytoplasm. In terms of biological role, essential for male and female fertility, playing a crucial role in regulating germ cell development by ensuring the proper progression of meiosis prophase I. Regulates mitotic-to-meiotic transition in spermatogenesis by forming a complex with MEIOC and YTHDC2 which recognizes and down-regulates mitotic transcripts for a successful meiotic entry. Required for normal synaptonemal complex formation during meiosis, binding meiotic cohesin subunit mRNAs containing GCCUAU/GUUCGA motifs in their 3'UTRs regions and positively regulating their translation. Required for spermatogonial differentiation in both developing and adult testis. The sequence is that of Probable RNA-binding protein 46 (RBM46) from Homo sapiens (Human).